Here is a 155-residue protein sequence, read N- to C-terminus: SsrA-binding protein (155 aa).

A disordered region spans residues 136–155 (RESLKRRQDQRDMQRAMKNY).

The protein belongs to the SmpB family.

It is found in the cytoplasm. Its function is as follows. Required for rescue of stalled ribosomes mediated by trans-translation. Binds to transfer-messenger RNA (tmRNA), required for stable association of tmRNA with ribosomes. tmRNA and SmpB together mimic tRNA shape, replacing the anticodon stem-loop with SmpB. tmRNA is encoded by the ssrA gene; the 2 termini fold to resemble tRNA(Ala) and it encodes a 'tag peptide', a short internal open reading frame. During trans-translation Ala-aminoacylated tmRNA acts like a tRNA, entering the A-site of stalled ribosomes, displacing the stalled mRNA. The ribosome then switches to translate the ORF on the tmRNA; the nascent peptide is terminated with the 'tag peptide' encoded by the tmRNA and targeted for degradation. The ribosome is freed to recommence translation, which seems to be the essential function of trans-translation. This is SsrA-binding protein from Nostoc sp. (strain PCC 7120 / SAG 25.82 / UTEX 2576).